Here is a 428-residue protein sequence, read N- to C-terminus: Protein Wnt-8b (428 aa).

The N-terminal stretch at 1–22 (MFYTGSFWFIFFILPAIPFCHS) is a signal peptide. A disulfide bond links C54 and C65. N123 and N176 each carry an N-linked (GlcNAc...) asparagine glycan. 10 cysteine pairs are disulfide-bonded: C177–C185, C187–C205, C253–C267, C255–C262, C329–C367, C345–C360, C364–C406, C382–C397, C384–C394, and C389–C390. Residue S259 is the site of O-palmitoleoyl serine attachment. N332 carries N-linked (GlcNAc...) asparagine glycosylation.

The protein belongs to the Wnt family. Post-translationally, palmitoleoylation is required for efficient binding to frizzled receptors. Depalmitoleoylation leads to Wnt signaling pathway inhibition. In terms of processing, proteolytic processing by tiki1 and tiki2 promotes oxidation and formation of large disulfide-bond oligomers, leading to inactivation of wnt8b. As to expression, in adults, in brain.

The protein resides in the secreted. It is found in the extracellular space. It localises to the extracellular matrix. Its function is as follows. Ligand for members of the frizzled family of seven transmembrane receptors. Plays a role in the initiation of dorsal axis development. May activate a Nieuwkoop center-like signaling pathway. The polypeptide is Protein Wnt-8b (wnt8b) (Xenopus laevis (African clawed frog)).